Reading from the N-terminus, the 477-residue chain is Aspartyl/glutamyl-tRNA(Asn/Gln) amidotransferase subunit B (477 aa).

The protein belongs to the GatB/GatE family. GatB subfamily. Heterotrimer of A, B and C subunits.

The enzyme catalyses L-glutamyl-tRNA(Gln) + L-glutamine + ATP + H2O = L-glutaminyl-tRNA(Gln) + L-glutamate + ADP + phosphate + H(+). It carries out the reaction L-aspartyl-tRNA(Asn) + L-glutamine + ATP + H2O = L-asparaginyl-tRNA(Asn) + L-glutamate + ADP + phosphate + 2 H(+). Functionally, allows the formation of correctly charged Asn-tRNA(Asn) or Gln-tRNA(Gln) through the transamidation of misacylated Asp-tRNA(Asn) or Glu-tRNA(Gln) in organisms which lack either or both of asparaginyl-tRNA or glutaminyl-tRNA synthetases. The reaction takes place in the presence of glutamine and ATP through an activated phospho-Asp-tRNA(Asn) or phospho-Glu-tRNA(Gln). The chain is Aspartyl/glutamyl-tRNA(Asn/Gln) amidotransferase subunit B from Clostridium tetani (strain Massachusetts / E88).